A 158-amino-acid polypeptide reads, in one-letter code: Small ribosomal subunit protein uS7 (158 aa).

Belongs to the universal ribosomal protein uS7 family. Part of the 30S ribosomal subunit. Contacts proteins S9 and S11.

Its function is as follows. One of the primary rRNA binding proteins, it binds directly to 16S rRNA where it nucleates assembly of the head domain of the 30S subunit. Is located at the subunit interface close to the decoding center, probably blocks exit of the E-site tRNA. The polypeptide is Small ribosomal subunit protein uS7 (Flavobacterium psychrophilum (strain ATCC 49511 / DSM 21280 / CIP 103535 / JIP02/86)).